A 53-amino-acid chain; its full sequence is UPF0391 membrane protein Acid_3618 (53 aa).

A run of 2 helical transmembrane segments spans residues 6–26 (LVFL…LAGA) and 28–48 (VGIA…AFLM).

Belongs to the UPF0391 family.

The protein resides in the cell membrane. This is UPF0391 membrane protein Acid_3618 from Solibacter usitatus (strain Ellin6076).